Here is a 142-residue protein sequence, read N- to C-terminus: Large ribosomal subunit protein uL16 (142 aa).

The protein belongs to the universal ribosomal protein uL16 family. In terms of assembly, part of the 50S ribosomal subunit.

Its function is as follows. Binds 23S rRNA and is also seen to make contacts with the A and possibly P site tRNAs. The sequence is that of Large ribosomal subunit protein uL16 from Mycoplasmopsis pulmonis (strain UAB CTIP) (Mycoplasma pulmonis).